We begin with the raw amino-acid sequence, 96 residues long: Large ribosomal subunit protein uL23 (96 aa).

It belongs to the universal ribosomal protein uL23 family. In terms of assembly, part of the 50S ribosomal subunit. Contacts protein L29, and trigger factor when it is bound to the ribosome.

Its function is as follows. One of the early assembly proteins it binds 23S rRNA. One of the proteins that surrounds the polypeptide exit tunnel on the outside of the ribosome. Forms the main docking site for trigger factor binding to the ribosome. This is Large ribosomal subunit protein uL23 from Caldicellulosiruptor bescii (strain ATCC BAA-1888 / DSM 6725 / KCTC 15123 / Z-1320) (Anaerocellum thermophilum).